The following is a 459-amino-acid chain: Mitochondrial distribution and morphology protein 10 (459 aa).

Belongs to the MDM10 family. As to quaternary structure, component of the ER-mitochondria encounter structure (ERMES) or MDM complex, composed of mmm1, mdm10, mdm12 and mdm34. Associates with the mitochondrial outer membrane sorting assembly machinery SAM(core) complex.

It is found in the mitochondrion outer membrane. Functionally, component of the ERMES/MDM complex, which serves as a molecular tether to connect the endoplasmic reticulum and mitochondria. Components of this complex are involved in the control of mitochondrial shape and protein biogenesis and may function in phospholipid exchange. mdm10 is involved in the late assembly steps of the general translocase of the mitochondrial outer membrane (TOM complex). Functions in the tom40-specific route of the assembly of outer membrane beta-barrel proteins, including the association of tom40 with the receptor tom22 and small TOM proteins. Can associate with the SAM(core) complex as well as the mdm12-mmm1 complex, both involved in late steps of the major beta-barrel assembly pathway, that is responsible for biogenesis of all outer membrane beta-barrel proteins. May act as a switch that shuttles between both complexes and channels precursor proteins into the tom40-specific pathway. Plays a role in mitochondrial morphology and in the inheritance of mitochondria. In Aspergillus terreus (strain NIH 2624 / FGSC A1156), this protein is Mitochondrial distribution and morphology protein 10 (mdmB).